The chain runs to 200 residues: Somatotropin (200 aa).

Positions Met1–Thr22 are cleaved as a signal peptide. His38 contacts Zn(2+). Residues Cys71 and Cys173 are joined by a disulfide bond. Glu182 contributes to the Zn(2+) binding site. Cys190 and Cys198 are joined by a disulfide.

Belongs to the somatotropin/prolactin family.

It localises to the secreted. In terms of biological role, growth hormone plays an important role in growth control and is involved in the regulation of several anabolic processes. Implicated as an osmoregulatory substance important for seawater adaptation. The polypeptide is Somatotropin (gh) (Ictalurus punctatus (Channel catfish)).